The chain runs to 71 residues: Virion membrane protein A13 homolog (71 aa).

Residues 1 to 21 (MGIIDTFVITAVTVIIFCLLI) form a helical membrane-spanning segment. Residues 22-70 (YAAYKRYKCIPSPDDRDKVLKSTLNDDTLFNQTLTPDQVKALHRLVTSS) lie on the Virion surface side of the membrane.

It belongs to the chordopoxvirinae A13 family.

It is found in the virion membrane. Its function is as follows. Essential for the encapsidation of DNA into immature virions (IV) and the subsequent maturation of IV into mature virions (MV). This Vertebrata (FPV) protein is Virion membrane protein A13 homolog.